The primary structure comprises 101 residues: Growth-regulated alpha protein (101 aa).

An N-terminal signal peptide occupies residues 1–28; sequence MAPATRSLLRAPLLLLLLLLATSRLATG. 2 disulfides stabilise this stretch: cysteine 37–cysteine 63 and cysteine 39–cysteine 79.

This sequence belongs to the intercrine alpha (chemokine CxC) family.

The protein resides in the secreted. Functionally, has chemotactic activity for neutrophils. The protein is Growth-regulated alpha protein (CXCL1) of Cricetulus griseus (Chinese hamster).